The primary structure comprises 371 residues: 4-hydroxy-3-methylbut-2-en-1-yl diphosphate synthase (flavodoxin) (371 aa).

4 residues coordinate [4Fe-4S] cluster: Cys-271, Cys-274, Cys-306, and Glu-313.

It belongs to the IspG family. It depends on [4Fe-4S] cluster as a cofactor.

It catalyses the reaction (2E)-4-hydroxy-3-methylbut-2-enyl diphosphate + oxidized [flavodoxin] + H2O + 2 H(+) = 2-C-methyl-D-erythritol 2,4-cyclic diphosphate + reduced [flavodoxin]. Its pathway is isoprenoid biosynthesis; isopentenyl diphosphate biosynthesis via DXP pathway; isopentenyl diphosphate from 1-deoxy-D-xylulose 5-phosphate: step 5/6. Functionally, converts 2C-methyl-D-erythritol 2,4-cyclodiphosphate (ME-2,4cPP) into 1-hydroxy-2-methyl-2-(E)-butenyl 4-diphosphate. The protein is 4-hydroxy-3-methylbut-2-en-1-yl diphosphate synthase (flavodoxin) of Actinobacillus succinogenes (strain ATCC 55618 / DSM 22257 / CCUG 43843 / 130Z).